A 215-amino-acid chain; its full sequence is MAVGLDRADKSNYALRLKEMFNKEIRLQCRETNISKMSSKFHDNLLTAMEKADWQQRELERIERQLVLNRQELEKRLLLEKELTRELEATKLQEATVREHNNELMECIHALKRATGTSINHDALPARVKGVTVLRNTDGDQWIPFDLAVTDTEGLNSLCQKLQSNNIDVNKWRQLVSLATEMSMKWNYSTPNRRDNAKVDIIEIDLTSPTNQIIL.

A coiled-coil region spans residues 43-114; the sequence is DNLLTAMEKA…MECIHALKRA (72 aa).

Belongs to the SPC25 family. In terms of assembly, component of the Ndc80 complex, which is composed of Ndc80, Nuf2 and Spc25.

The protein resides in the nucleus. It is found in the chromosome. The protein localises to the centromere. Its subcellular location is the kinetochore. Functionally, acts as a component of the essential kinetochore-associated Ndc80 complex, which is required for chromosome segregation and spindle checkpoint activity during meiosis and mitosis. Required for kinetochore integrity and the organization of stable microtubule binding sites in the outer plate of the kinetochore. Participates in SAC signaling that responds specifically to disruptions in spindle microtubule dynamics. The NDC80 complex synergistically enhances the affinity of the SKA1 complex for microtubules and may allow the NDC80 complex to track depolymerizing microtubules. The protein is Kinetochore protein Spc25 of Drosophila ananassae (Fruit fly).